The following is a 279-amino-acid chain: Putative methyltransferase Jann_4284 (279 aa).

In Jannaschia sp. (strain CCS1), this protein is Putative methyltransferase Jann_4284.